Reading from the N-terminus, the 874-residue chain is Coatomer subunit gamma-1 (874 aa).

Over residues 1-11 (MLKKFDKKDEE) the composition is skewed to basic and acidic residues. Residues 1 to 21 (MLKKFDKKDEESGGGSNPFQH) form a disordered region. HEAT repeat units follow at residues 64-101 (TEAT…IAED), 283-320 (KELA…KHPS), 322-355 (VTAC…GSES), and 356-392 (SIDR…KYPR). Thr594 carries the post-translational modification Phosphothreonine. The tract at residues 609 to 874 (RQEIFQEQLA…PVDIILASVG (266 aa)) is interaction with ZNF289/ARFGAP2.

This sequence belongs to the COPG family. In terms of assembly, oligomeric complex that consists of at least the alpha, beta, beta', gamma, delta, epsilon and zeta subunits. Interacts with ZNF289/ARFGAP2 through its C-terminal appendage domain. Interacts with EGFR upon EGF treatment; interaction is essential for regulation of EGF-dependent nuclear transport of EGFR by retrograde trafficking from the Golgi to the ER. The coatomer interacts with KDEL receptors; the interaction is important for retrograde trafficking of KDEL-bearing proteins from the Golgi to the endoplasmic reticulum. Interacts with COPB1. Interacts with TMED10 (via C-terminus). Interacts with TMED2, TMED3, TMED7 and TMED9.

The protein localises to the cytoplasm. It localises to the golgi apparatus membrane. It is found in the cytoplasmic vesicle. Its subcellular location is the COPI-coated vesicle membrane. Functionally, the coatomer is a cytosolic protein complex that binds to dilysine motifs and reversibly associates with Golgi non-clathrin-coated vesicles, which further mediate biosynthetic protein transport from the ER, via the Golgi up to the trans Golgi network. Coatomer complex is required for budding from Golgi membranes, and is essential for the retrograde Golgi-to-ER transport of dilysine-tagged proteins. In mammals, the coatomer can only be recruited by membranes associated to ADP-ribosylation factors (ARFs), which are small GTP-binding proteins; the complex also influences the Golgi structural integrity, as well as the processing, activity, and endocytic recycling of LDL receptors. Required for limiting lipid storage in lipid droplets. Involved in lipid homeostasis by regulating the presence of perilipin family members PLIN2 and PLIN3 at the lipid droplet surface and promoting the association of adipocyte triglyceride lipase (PNPLA2) with the lipid droplet surface to mediate lipolysis. The polypeptide is Coatomer subunit gamma-1 (COPG1) (Homo sapiens (Human)).